Here is a 533-residue protein sequence, read N- to C-terminus: MTDPKTSKEQKYDRQLRLWGDHGQEALENAHVCLINATASGTEILKNLVLPGIGAFTIVDGHKVSGEDVGNNFFLSSSAIGKNRAQAATELLQELNSDVSGNFVEESPDKLLDNDCEFFHRFSLVIAVQLPESTCLRLGAVLWEAGVPFLVCRTYGLIGYMRLIVKEHTVVESHPDNALEDLRLDQPFTELKRHVESYDLDNMEKKDHSHTPWIIVVARYLEKWYNENNSQLPKNYKEKEAFRQLLREGILKNENGGLEDEENFEEAIKNVNTALNPTKISSGTQDIFNAEQCENITSQSSSFWVMAHGVRDFVQNEGNGNLPVRGSIPDMIADSDKFIKLQNVYRDKAMRDAAVVSKHVEMLLQSVGKTPESISEQEIKLFCKNAAFLRVVRCRSLADEYSVDTFNKDEITSCMDSPDSEMVLYLMLRSVDRFYQQHSRYPGVYNYQVEEDINKLKLCVNSLLQEYSLNVNVKDDYIHEFCRYGAAEPHTVAAFLGGSAAQEAIKIITHQFVPFNNTFLYNAMSQTSATFQL.

The tract at residues 330 to 343 (DMIADSDKFIKLQN) is interaction with uba3.

This sequence belongs to the ubiquitin-activating E1 family. ULA1 subfamily. In terms of assembly, heterodimer of uba3 and nae1. The complex binds nedd8 and ube2m.

The protein operates within protein modification; protein neddylation. In terms of biological role, regulatory subunit of the dimeric uba3-nae1 E1 enzyme. E1 activates nedd8 by first adenylating its C-terminal glycine residue with ATP, thereafter linking this residue to the side chain of the catalytic cysteine, yielding a nedd8-uba3 thioester and free AMP. E1 finally transfers nedd8 to the catalytic cysteine of ube2m. The covalent attachment of nedd8 to target proteins is known as 'neddylation' and the process is involved in the regulation of cell growth, viability and development. In Danio rerio (Zebrafish), this protein is NEDD8-activating enzyme E1 regulatory subunit (nae1).